The chain runs to 276 residues: Dermonecrotic toxin LlSicTox-alphaIV2iv (276 aa).

The active site involves histidine 5. Mg(2+)-binding residues include glutamate 25 and aspartate 27. Residue histidine 41 is the Nucleophile of the active site. 2 disulfide bridges follow: cysteine 45–cysteine 51 and cysteine 47–cysteine 193. Aspartate 85 serves as a coordination point for Mg(2+).

This sequence belongs to the arthropod phospholipase D family. Class II subfamily. Mg(2+) is required as a cofactor. Expressed by the venom gland.

It is found in the secreted. It carries out the reaction an N-(acyl)-sphingosylphosphocholine = an N-(acyl)-sphingosyl-1,3-cyclic phosphate + choline. The catalysed reaction is an N-(acyl)-sphingosylphosphoethanolamine = an N-(acyl)-sphingosyl-1,3-cyclic phosphate + ethanolamine. It catalyses the reaction a 1-acyl-sn-glycero-3-phosphocholine = a 1-acyl-sn-glycero-2,3-cyclic phosphate + choline. The enzyme catalyses a 1-acyl-sn-glycero-3-phosphoethanolamine = a 1-acyl-sn-glycero-2,3-cyclic phosphate + ethanolamine. Dermonecrotic toxins cleave the phosphodiester linkage between the phosphate and headgroup of certain phospholipids (sphingolipid and lysolipid substrates), forming an alcohol (often choline) and a cyclic phosphate. This toxin acts on sphingomyelin (SM). It may also act on ceramide phosphoethanolamine (CPE), lysophosphatidylcholine (LPC) and lysophosphatidylethanolamine (LPE), but not on lysophosphatidylserine (LPS), and lysophosphatidylglycerol (LPG). It acts by transphosphatidylation, releasing exclusively cyclic phosphate products as second products. Induces dermonecrosis, hemolysis, increased vascular permeability, edema, inflammatory response, and platelet aggregation. This is Dermonecrotic toxin LlSicTox-alphaIV2iv from Loxosceles laeta (South American recluse spider).